The sequence spans 485 residues: ATP-dependent 6-phosphofructokinase (485 aa).

Residues Gly-105, Arg-171–Gly-172, and Gly-196–Thr-199 each bind ATP. Position 197 (Asp-197) interacts with Mg(2+). Substrate is bound by residues Thr-225–Asp-227, Met-270–Arg-272, Glu-323, and Tyr-378–Arg-381. Asp-227 acts as the Proton acceptor in catalysis. A Peroxisomal targeting signal motif is present at residues Ser-483–Leu-485.

This sequence belongs to the phosphofructokinase type A (PFKA) family. PPi-dependent PFK group II subfamily. Atypical ATP-dependent clade 'X' sub-subfamily. Homotetramer. Requires Mg(2+) as cofactor.

Its subcellular location is the glycosome. It carries out the reaction beta-D-fructose 6-phosphate + ATP = beta-D-fructose 1,6-bisphosphate + ADP + H(+). It participates in carbohydrate degradation; glycolysis; D-glyceraldehyde 3-phosphate and glycerone phosphate from D-glucose: step 3/4. Its activity is regulated as follows. Allosterically activated by AMP. Catalyzes the phosphorylation of D-fructose 6-phosphate to fructose 1,6-bisphosphate by ATP, the first committing step of glycolysis. This chain is ATP-dependent 6-phosphofructokinase, found in Trypanosoma cruzi (strain CL Brener).